The chain runs to 255 residues: Taurine import ATP-binding protein TauB (255 aa).

Residues 2–229 (LQISHLYADY…RFVAGESSRS (228 aa)) enclose the ABC transporter domain. 34 to 41 (GPSGCGKT) contacts ATP.

It belongs to the ABC transporter superfamily. Taurine importer (TC 3.A.1.17.1) family. The complex is composed of two ATP-binding proteins (TauB), two transmembrane proteins (TauC) and a solute-binding protein (TauA).

Its subcellular location is the cell inner membrane. The enzyme catalyses taurine(out) + ATP + H2O = taurine(in) + ADP + phosphate + H(+). Its function is as follows. Part of the ABC transporter complex TauABC involved in taurine import. Responsible for energy coupling to the transport system. This is Taurine import ATP-binding protein TauB from Shigella dysenteriae serotype 1 (strain Sd197).